The following is a 1988-amino-acid chain: Protein Ycf2 (1988 aa).

1337 to 1344 is a binding site for ATP; the sequence is GSIGTGRS. The interval 1377–1396 is disordered; that stretch reads SDDDSDDIDDSGDIDDSDDI.

The protein belongs to the Ycf2 family.

The protein resides in the plastid. Its subcellular location is the chloroplast stroma. Functionally, probable ATPase of unknown function. Its presence in a non-photosynthetic plant (Epifagus virginiana) and experiments in tobacco indicate that it has an essential function which is probably not related to photosynthesis. This chain is Protein Ycf2, found in Cucumis sativus (Cucumber).